A 456-amino-acid chain; its full sequence is Kynurenine 3-monooxygenase (456 aa).

Belongs to the aromatic-ring hydroxylase family. KMO subfamily. FAD is required as a cofactor.

It localises to the mitochondrion outer membrane. The catalysed reaction is L-kynurenine + NADPH + O2 + H(+) = 3-hydroxy-L-kynurenine + NADP(+) + H2O. Its pathway is cofactor biosynthesis; NAD(+) biosynthesis; quinolinate from L-kynurenine: step 1/3. Functionally, catalyzes the hydroxylation of L-kynurenine (L-Kyn) to form 3-hydroxy-L-kynurenine (L-3OHKyn). Required for synthesis of quinolinic acid. The protein is Kynurenine 3-monooxygenase of Candida albicans (strain SC5314 / ATCC MYA-2876) (Yeast).